A 367-amino-acid polypeptide reads, in one-letter code: Undecaprenyl-phosphate alpha-N-acetylglucosaminyl 1-phosphate transferase (367 aa).

The next 10 membrane-spanning stretches (helical) occupy residues Leu-3–Phe-23, Leu-46–Val-66, Tyr-69–Leu-89, Val-132–Phe-152, Ile-158–Trp-178, Ile-187–Leu-207, Val-213–Glu-233, Ile-242–Met-262, Ala-294–Tyr-314, and Val-318–Ile-338.

This sequence belongs to the glycosyltransferase 4 family. WecA subfamily. Mg(2+) is required as a cofactor. Requires Mn(2+) as cofactor.

It is found in the cell inner membrane. The catalysed reaction is di-trans,octa-cis-undecaprenyl phosphate + UDP-N-acetyl-alpha-D-glucosamine = N-acetyl-alpha-D-glucosaminyl-di-trans,octa-cis-undecaprenyl diphosphate + UMP. Its pathway is bacterial outer membrane biogenesis; LPS O-antigen biosynthesis. It participates in bacterial outer membrane biogenesis; enterobacterial common antigen biosynthesis. Its function is as follows. Catalyzes the transfer of the GlcNAc-1-phosphate moiety from UDP-GlcNAc onto the carrier lipid undecaprenyl phosphate (C55-P), yielding GlcNAc-pyrophosphoryl-undecaprenyl (GlcNAc-PP-C55). The sequence is that of Undecaprenyl-phosphate alpha-N-acetylglucosaminyl 1-phosphate transferase from Escherichia coli O157:H7.